The primary structure comprises 193 residues: Ribonuclease HII (193 aa).

The region spanning 15-193 (CIVAGIDEAG…PYHRRSFRCC (179 aa)) is the RNase H type-2 domain. Residues Asp21, Glu22, and Asp112 each coordinate a divalent metal cation.

This sequence belongs to the RNase HII family. It depends on Mn(2+) as a cofactor. Requires Mg(2+) as cofactor.

Its subcellular location is the cytoplasm. It catalyses the reaction Endonucleolytic cleavage to 5'-phosphomonoester.. Its function is as follows. Endonuclease that specifically degrades the RNA of RNA-DNA hybrids. The protein is Ribonuclease HII of Rickettsia africae (strain ESF-5).